Consider the following 263-residue polypeptide: Methylesterase 3 (263 aa).

The active-site Acyl-ester intermediate is Ser-85. Residues Asp-213 and His-241 each act as charge relay system in the active site.

This sequence belongs to the AB hydrolase superfamily. Methylesterase family.

It catalyses the reaction methyl (indol-3-yl)acetate + H2O = (indol-3-yl)acetate + methanol + H(+). It carries out the reaction methyl (-)-jasmonate + H2O = jasmonate + methanol + H(+). It participates in plant hormone biosynthesis. The protein operates within lipid metabolism; oxylipin biosynthesis. Its function is as follows. Methylesterase shown to have carboxylesterase activity, methyl indole-3-acetic acid (MeIAA) esterase activity and methyl jasmonate (MeJA) esterase activity in vitro. In Arabidopsis thaliana (Mouse-ear cress), this protein is Methylesterase 3.